Reading from the N-terminus, the 191-residue chain is MKINGNEIRPGNVIEHQGSLWVAVKCNAVKPGKGGAFNQVEMKNLIDGTKLNERFRAAETVERVRLEQKDFTFLYQQGDALIFMDSQSYEQLELQKDFVGERAAFLQDGMTVTVELYQEKPIGISLPDQVSVTIVEADPALKGQTVTASYKPAILENGIRILVPPFINAGERIIVDTNELIYVRRANEKDK.

The protein belongs to the elongation factor P family.

Its subcellular location is the cytoplasm. It participates in protein biosynthesis; polypeptide chain elongation. Involved in peptide bond synthesis. Stimulates efficient translation and peptide-bond synthesis on native or reconstituted 70S ribosomes in vitro. Probably functions indirectly by altering the affinity of the ribosome for aminoacyl-tRNA, thus increasing their reactivity as acceptors for peptidyl transferase. This chain is Elongation factor P, found in Bartonella henselae (strain ATCC 49882 / DSM 28221 / CCUG 30454 / Houston 1) (Rochalimaea henselae).